Consider the following 785-residue polypeptide: E3 UFM1-protein ligase 1 homolog (785 aa).

Positions 404 to 482 are disordered; that stretch reads NASFQDQDDD…AGGGGGNKKT (79 aa).

This sequence belongs to the UFL1 family.

Its function is as follows. E3 UFM1-protein ligase that mediates ufmylation of target proteins. In Drosophila persimilis (Fruit fly), this protein is E3 UFM1-protein ligase 1 homolog.